We begin with the raw amino-acid sequence, 63 residues long: MLKSASGALANVLKRSLVPAARVTAVVPLRRSHGGPVESDEEFDSRYEAFFNRKDIDGWEIRK.

Belongs to the cytochrome c oxidase subunit 5A family. In terms of assembly, component of the cytochrome c oxidase (complex IV, CIV), a multisubunit enzyme composed of a catalytic core of 3 subunits and several supernumerary subunits. The complex exists as a monomer or a dimer and forms supercomplexes (SCs) in the inner mitochondrial membrane with ubiquinol-cytochrome c oxidoreductase (cytochrome b-c1 complex, complex III, CIII).

It is found in the mitochondrion inner membrane. Its pathway is energy metabolism; oxidative phosphorylation. Its function is as follows. Component of the cytochrome c oxidase, the last enzyme in the mitochondrial electron transport chain which drives oxidative phosphorylation. The respiratory chain contains 3 multisubunit complexes succinate dehydrogenase (complex II, CII), ubiquinol-cytochrome c oxidoreductase (cytochrome b-c1 complex, complex III, CIII) and cytochrome c oxidase (complex IV, CIV), that cooperate to transfer electrons derived from NADH and succinate to molecular oxygen, creating an electrochemical gradient over the inner membrane that drives transmembrane transport and the ATP synthase. Cytochrome c oxidase is the component of the respiratory chain that catalyzes the reduction of oxygen to water. Electrons originating from reduced cytochrome c in the intermembrane space (IMS) are transferred via the dinuclear copper A center (CU(A)) of subunit 2 and heme A of subunit 1 to the active site in subunit 1, a binuclear center (BNC) formed by heme A3 and copper B (CU(B)). The BNC reduces molecular oxygen to 2 water molecules using 4 electrons from cytochrome c in the IMS and 4 protons from the mitochondrial matrix. The chain is Cytochrome c oxidase subunit 5A, mitochondrial (COVA) from Manduca sexta (Tobacco hawkmoth).